The chain runs to 58 residues: Large ribosomal subunit protein bL32 (58 aa).

Disordered regions lie at residues 1 to 22 (MAVP…HWKR) and 39 to 58 (LSGR…DDEE).

The protein belongs to the bacterial ribosomal protein bL32 family.

This is Large ribosomal subunit protein bL32 from Crocosphaera subtropica (strain ATCC 51142 / BH68) (Cyanothece sp. (strain ATCC 51142)).